A 241-amino-acid chain; its full sequence is Phosphoribosylaminoimidazole-succinocarboxamide synthase (241 aa).

This sequence belongs to the SAICAR synthetase family.

It catalyses the reaction 5-amino-1-(5-phospho-D-ribosyl)imidazole-4-carboxylate + L-aspartate + ATP = (2S)-2-[5-amino-1-(5-phospho-beta-D-ribosyl)imidazole-4-carboxamido]succinate + ADP + phosphate + 2 H(+). Its pathway is purine metabolism; IMP biosynthesis via de novo pathway; 5-amino-1-(5-phospho-D-ribosyl)imidazole-4-carboxamide from 5-amino-1-(5-phospho-D-ribosyl)imidazole-4-carboxylate: step 1/2. The sequence is that of Phosphoribosylaminoimidazole-succinocarboxamide synthase from Deinococcus geothermalis (strain DSM 11300 / CIP 105573 / AG-3a).